Consider the following 179-residue polypeptide: Ribulose bisphosphate carboxylase small subunit, chloroplastic 2 (179 aa).

The transit peptide at 1–58 (MASSATMLSSVATAACVAPAQASMVAPFVGLKSASAFPVTQKTVTGLSTLPSNGGRVQ) directs the protein to the chloroplast.

The protein belongs to the RuBisCO small chain family. As to quaternary structure, heterohexadecamer of 8 large and 8 small subunits.

The protein localises to the plastid. It localises to the chloroplast. In terms of biological role, ruBisCO catalyzes two reactions: the carboxylation of D-ribulose 1,5-bisphosphate, the primary event in carbon dioxide fixation, as well as the oxidative fragmentation of the pentose substrate. Both reactions occur simultaneously and in competition at the same active site. Although the small subunit is not catalytic it is essential for maximal activity. The sequence is that of Ribulose bisphosphate carboxylase small subunit, chloroplastic 2 from Fritillaria agrestis (Stinkbells).